The sequence spans 173 residues: Trafficking regulator of GLUT4 1 (173 aa).

Polar residues predominate over residues Met-1–Pro-17. The segment at Met-1–Glu-22 is disordered. Topologically, residues Met-1 to Leu-102 are cytoplasmic. Ser-16, Ser-43, Ser-45, Ser-70, Ser-84, and Ser-85 each carry phosphoserine. Residues Val-103–Phe-123 constitute an intramembrane region (helical). Residues Ser-124–Ser-150 lie on the Cytoplasmic side of the membrane. Residues Ile-151–Val-171 form a helical membrane-spanning segment. Over Pro-172 to Lys-173 the chain is Extracellular.

It belongs to the CD225/Dispanin family. As to quaternary structure, interacts with SLC2A4; the interaction is required for proper SLC2A4 reacycling after insulin stimulation. In terms of tissue distribution, present in adipose tissue and undetectable in other tissues (at protein level).

The protein localises to the cell membrane. Its subcellular location is the endomembrane system. The protein resides in the cytoplasm. It is found in the perinuclear region. Regulates insulin-mediated adipose tissue glucose uptake and transport by modulation of SLC2A4 recycling. Not required for SLC2A4 membrane fusion upon an initial stimulus, but rather is necessary for proper protein recycling during prolonged insulin stimulation. The sequence is that of Trafficking regulator of GLUT4 1 from Rattus norvegicus (Rat).